A 557-amino-acid chain; its full sequence is Thermosome subunit 2 (557 aa).

Residues 527–557 (DLSTGGDDDEEGGAPGGMGGMGGMGGMGGAM) form a disordered region. The span at 539 to 557 (GAPGGMGGMGGMGGMGGAM) shows a compositional bias: gly residues.

This sequence belongs to the TCP-1 chaperonin family. In terms of assembly, the thermosome or CCT complex is a oligomeric complex of two octameric double-ring structures; the complex is probably a heterooligomer of CCT1, CCT2 and CCT3 with yet unknown stoichiometry.

In terms of biological role, molecular chaperone that assists in the folding or refolding of nascent or denatured proteins along with ATP hydrolysis. ATPase activity is highest in thermosome assemblies containing CCT1:CCT2, followed by assemblies containing CCT1:CCT2:CCT3. Seems to contribute to thermosome ATPase activity. Not required for growth. The sequence is that of Thermosome subunit 2 (cct2) from Haloferax volcanii (strain ATCC 29605 / DSM 3757 / JCM 8879 / NBRC 14742 / NCIMB 2012 / VKM B-1768 / DS2) (Halobacterium volcanii).